Consider the following 235-residue polypeptide: UPF0702 transmembrane protein YdfS (235 aa).

A run of 2 helical transmembrane segments spans residues 32–52 (MTIF…GLAY) and 60–80 (NMAI…FLSI).

Belongs to the UPF0702 family.

The protein resides in the cell membrane. The sequence is that of UPF0702 transmembrane protein YdfS (ydfS) from Bacillus subtilis (strain 168).